A 273-amino-acid chain; its full sequence is Programmed cell death 1 ligand 2 (273 aa).

The N-terminal stretch at 1–19 is a signal peptide; the sequence is MIFLLLMLSLELQLHQIAA. Topologically, residues 20–220 are extracellular; sequence LFTVTVPKEL…SQMEPRTHPT (201 aa). The region spanning 21–118 is the Ig-like V-type domain; it reads FTVTVPKELY…AWDYKYLTLK (98 aa). Residues N37, N64, N157, N163, and N189 are each glycosylated (N-linked (GlcNAc...) asparagine). Cystine bridges form between C42–C102 and C143–C192. The Ig-like C2-type domain occupies 122–203; the sequence is SYRKINTHIL…FWNTHVRELT (82 aa). A helical membrane pass occupies residues 221 to 241; the sequence is WLLHIFIPFCIIAFIFIATVI. Residues 242-273 lie on the Cytoplasmic side of the membrane; sequence ALRKQLCQKLYSSKDTTKRPVTTTKREVNSAI.

This sequence belongs to the immunoglobulin superfamily. BTN/MOG family. Interacts with PDCD1. As to expression, highly expressed in heart, placenta, pancreas, lung and liver and weakly expressed in spleen, lymph nodes and thymus.

It is found in the secreted. The protein localises to the endomembrane system. The protein resides in the cell membrane. Functionally, involved in the costimulatory signal, essential for T-cell proliferation and IFNG production in a PDCD1-independent manner. Interaction with PDCD1 inhibits T-cell proliferation by blocking cell cycle progression and cytokine production. The chain is Programmed cell death 1 ligand 2 (PDCD1LG2) from Homo sapiens (Human).